The primary structure comprises 500 residues: Cytosol aminopeptidase (500 aa).

The Mn(2+) site is built by lysine 265 and aspartate 270. Lysine 277 is a catalytic residue. Mn(2+)-binding residues include aspartate 288, aspartate 347, and glutamate 349. Residue arginine 351 is part of the active site.

It belongs to the peptidase M17 family. It depends on Mn(2+) as a cofactor.

It localises to the cytoplasm. It carries out the reaction Release of an N-terminal amino acid, Xaa-|-Yaa-, in which Xaa is preferably Leu, but may be other amino acids including Pro although not Arg or Lys, and Yaa may be Pro. Amino acid amides and methyl esters are also readily hydrolyzed, but rates on arylamides are exceedingly low.. It catalyses the reaction Release of an N-terminal amino acid, preferentially leucine, but not glutamic or aspartic acids.. Presumably involved in the processing and regular turnover of intracellular proteins. Catalyzes the removal of unsubstituted N-terminal amino acids from various peptides. In Rickettsia prowazekii (strain Madrid E), this protein is Cytosol aminopeptidase (pepA).